A 429-amino-acid chain; its full sequence is Adenylosuccinate synthetase (429 aa).

GTP contacts are provided by residues 12 to 18 (GDEGKGK) and 40 to 42 (GHT). Asp-13 (proton acceptor) is an active-site residue. Asp-13 and Gly-40 together coordinate Mg(2+). IMP is bound by residues 13-16 (DEGK), 38-41 (NAGH), Thr-128, Arg-142, Gln-223, Thr-238, and Arg-302. Residue His-41 is the Proton donor of the active site. 298–304 (TTTGRPR) contributes to the substrate binding site. GTP contacts are provided by residues Arg-304, 330 to 332 (SID), and 412 to 414 (SVG).

Belongs to the adenylosuccinate synthetase family. In terms of assembly, homodimer. Requires Mg(2+) as cofactor.

The protein resides in the cytoplasm. The catalysed reaction is IMP + L-aspartate + GTP = N(6)-(1,2-dicarboxyethyl)-AMP + GDP + phosphate + 2 H(+). It participates in purine metabolism; AMP biosynthesis via de novo pathway; AMP from IMP: step 1/2. Functionally, plays an important role in the de novo pathway of purine nucleotide biosynthesis. Catalyzes the first committed step in the biosynthesis of AMP from IMP. The polypeptide is Adenylosuccinate synthetase (Bacillus cereus (strain ZK / E33L)).